The primary structure comprises 251 residues: Regulator of G-protein signaling 7-binding protein B (251 aa).

The segment at 1-43 is disordered; the sequence is MCSAPNGRKNRPRSAANIFQIGKSSVRDPERRESTESARRAQR. Positions 25–43 are enriched in basic and acidic residues; the sequence is SVRDPERRESTESARRAQR. S-palmitoyl cysteine attachment occurs at residues C246 and C247.

It belongs to the RGS7BP/RGS9BP family. Post-translationally, palmitoylated. Undergoes rapid palmitoylation turnover. Palmitoylation regulates the cell membrane and nuclear shuttling and the regulation of GPCR signaling. Upon depalmitoylation, it is targeted from the plasma membrane into the nucleus. GPCR signaling inhibits depalmitoylation and promotes localization to the plasma membrane.

It localises to the nucleus. The protein resides in the cytoplasm. Its subcellular location is the cell membrane. Functionally, regulator of G protein-coupled receptor (GPCR) signaling. Regulatory subunit of the R7-Gbeta5 complexes that acts by controlling the subcellular location of the R7-Gbeta5 complexes. When palmitoylated, it targets the R7-Gbeta5 complexes to the plasma membrane, leading to inhibit G protein alpha subunits. When it is unpalmitoylated, the R7-Gbeta5 complexes undergo a nuclear/cytoplasmic shuttling. This chain is Regulator of G-protein signaling 7-binding protein B (rgs7bpb), found in Danio rerio (Zebrafish).